A 247-amino-acid polypeptide reads, in one-letter code: Ubiquinone biosynthesis O-methyltransferase (247 aa).

R41, G72, D93, and M136 together coordinate S-adenosyl-L-methionine.

The protein belongs to the methyltransferase superfamily. UbiG/COQ3 family.

It catalyses the reaction a 3-demethylubiquinol + S-adenosyl-L-methionine = a ubiquinol + S-adenosyl-L-homocysteine + H(+). The catalysed reaction is a 3-(all-trans-polyprenyl)benzene-1,2-diol + S-adenosyl-L-methionine = a 2-methoxy-6-(all-trans-polyprenyl)phenol + S-adenosyl-L-homocysteine + H(+). It functions in the pathway cofactor biosynthesis; ubiquinone biosynthesis. In terms of biological role, O-methyltransferase that catalyzes the 2 O-methylation steps in the ubiquinone biosynthetic pathway. This Bartonella tribocorum (strain CIP 105476 / IBS 506) protein is Ubiquinone biosynthesis O-methyltransferase.